Reading from the N-terminus, the 288-residue chain is Methyltransferase ucsB (288 aa).

Residues aspartate 87 and 121-122 (DA) each bind S-adenosyl-L-methionine.

It belongs to the class I-like SAM-binding methyltransferase superfamily.

It participates in mycotoxin biosynthesis. In terms of biological role, methyltransferase; part of the gene cluster that mediates the biosynthesis of UCS1025A, a member of the pyrrolizidinone family that acts as a strong telomerase inhibitor and displays potent antibacterial and antitumor properties. These compounds share a hemiaminal-containing pyrrolizidinone core fused with a gamma-lactone, giving a furopyrrolizidine that is connected to a decalin fragment. The polyketide synthase module (PKS) of the PKS-NRPS ucsA is responsible for the synthesis of the polyketide backbone via the condensation of an acetyl-CoA starter unit with 6 malonyl-CoA units. The downstream nonribosomal peptide synthetase (NRPS) module then amidates the carboxyl end of the polyketide with a 2S,3S-methylproline derived from L-isoleucine by the 2-oxoglutarate-dependent dioxygenase ucsF which converts L-isoleucine to (4S,5S)-4-methylpyrroline-5-carboxylate that is further converted to 2S,3S-methylproline by the pyrroline-5-carboxylate reductase ucsG. Reductive release of the completed aminoacyl polyketide from the assembly line can form the 3-pyrrolin-2-one structure via an intramolecular Knoevenagel reaction. Because ucsA lacks a designated enoylreductase (ER) domain, the required activity is provided the enoyl reductase ucsL. This keto acyclic precursor is the substrate of the Diels-Alderase ucsH, that catalyzes the Diels-Alder cycloaddition. Oxidation of the 3S-methyl group to a carboxylate by the cytochrome P450 monooxygenase ucsK allows an oxa-Michael cyclization that might involve the reductase/dehydrogenase ucsI and which furnishes the furopyrrolizidine. The oxidase ucsJ likely plays a critical role in stereoselective reduction of the C5-C6 double bond to afford the required R-configured carboxylate group. Further enolization and oxidation at C5 by an unidentified enzyme affords the last intermediate that can undergo oxa-Michael cyclization to yield UCS1025A. This chain is Methyltransferase ucsB, found in Acremonium sp.